The sequence spans 360 residues: Phenylalanine--tRNA ligase alpha subunit (360 aa).

E260 lines the Mg(2+) pocket.

This sequence belongs to the class-II aminoacyl-tRNA synthetase family. Phe-tRNA synthetase alpha subunit type 1 subfamily. As to quaternary structure, tetramer of two alpha and two beta subunits. Mg(2+) is required as a cofactor.

The protein localises to the cytoplasm. It carries out the reaction tRNA(Phe) + L-phenylalanine + ATP = L-phenylalanyl-tRNA(Phe) + AMP + diphosphate + H(+). In Methylobacterium nodulans (strain LMG 21967 / CNCM I-2342 / ORS 2060), this protein is Phenylalanine--tRNA ligase alpha subunit.